We begin with the raw amino-acid sequence, 309 residues long: Probable manganese-dependent inorganic pyrophosphatase (309 aa).

Residues histidine 9, aspartate 13, aspartate 15, aspartate 75, histidine 97, and aspartate 149 each coordinate Mn(2+).

Belongs to the PPase class C family. Mn(2+) serves as cofactor.

The protein resides in the cytoplasm. It catalyses the reaction diphosphate + H2O = 2 phosphate + H(+). The chain is Probable manganese-dependent inorganic pyrophosphatase from Bacillus cereus (strain B4264).